Consider the following 459-residue polypeptide: Cysteine--tRNA ligase (459 aa).

Cys28 provides a ligand contact to Zn(2+). The 'HIGH' region signature appears at 30-40; sequence VTVYDLCHIGH. Residues Cys209, His234, and Glu238 each coordinate Zn(2+). The 'KMSKS' region signature appears at 266 to 270; it reads KMSKS. Lys269 serves as a coordination point for ATP.

Belongs to the class-I aminoacyl-tRNA synthetase family. Monomer. Zn(2+) is required as a cofactor.

It localises to the cytoplasm. The catalysed reaction is tRNA(Cys) + L-cysteine + ATP = L-cysteinyl-tRNA(Cys) + AMP + diphosphate. This Histophilus somni (strain 2336) (Haemophilus somnus) protein is Cysteine--tRNA ligase.